A 228-amino-acid chain; its full sequence is Eukaryotic translation initiation factor 4E-1 (228 aa).

Residues 1–19 (MATAEMEKTTTFDEAEKVK) show a composition bias toward basic and acidic residues. Residues 1–33 (MATAEMEKTTTFDEAEKVKLNANEADDEVEEGE) form a disordered region. Positions 24–33 (EADDEVEEGE) are enriched in acidic residues. EIF4G-binding stretches follow at residues 53–56 (HPLE) and 63–99 (FDNPVAKSKQAAWGSSLRNVYTFSTVEDFWGAYNNIH). Residues 71 to 76 (KQAAWG), K103, and 121 to 122 (WE) contribute to the mRNA site. C126 and C164 are oxidised to a cystine. The EIF4G-binding stretch occupies residues 147–156 (YTLLAMIGHQ). MRNA contacts are provided by residues 171–176 (RGKGEK) and 216–220 (KRLDR).

The protein belongs to the eukaryotic initiation factor 4E family. As to quaternary structure, EIF4F is a multi-subunit complex, the composition of which varies with external and internal environmental conditions. It is composed of at least EIF4A, EIF4E and EIF4G. EIF4E is also known to interact with other partners. In higher plants two isoforms of EIF4F have been identified, named isoform EIF4F and isoform EIF(iso)4F. Isoform EIF4F has subunits p220 and p26, whereas isoform EIF(iso)4F has subunits p82 and p28. In terms of assembly, (Microbial infection) Interacts with potyvirus viral genome-linked protein (VPg); this interaction is possible in susceptible hosts but is impaired in resistant plants. Thus the VPg of tobacco etch virus (TEV) strain HAT interacts with susceptible alleles pvr2(+), pvr2(3) and pvr2(9) but not with the resistant allele pvr2(2), the VPg of TEV strain CAA10 interacts with susceptible alleles pvr2(+), pvr2(2), pvr2(3) and pvr2(9), the VPg of potato virus Y (PVY) strain LYE84 interacts with tomato eIF4E1 and eIF4E2 as well as with the Capsicum annuum eIF4E1 susceptible allele pvr2(+) but not with resistant alleles pvr2(1), pvr2(2), pvr2(3), pvr2(4), pvr2(5), pvr2(6), pvr2(7), pvr2(8) and pvr2(9) and the VPg of PVY strain SON41 interacts with C.annuum eIF4E1 susceptible alleles pvr2(+), pvr2(1), pvr2(2), pvr2(3) and pvr2(4) but not with resistant alleles pvr2(5), pvr2(6), pvr2(7), pvr2(8) and pvr2(9). In addition, the susceptible allele pvr1(+) interacts strongly with TEV strains HAT and NW VPg while resistance alleles (pvr1, pvr1(1), and pvr1(2)) fail to bind TEV VPg. In terms of processing, according to the redox status, the Cys-126-Cys-164 disulfide bridge may have a role in regulating protein function by affecting its ability to bind capped mRNA.

The protein localises to the nucleus. Its subcellular location is the cytoplasm. Functionally, component of the protein complex eIF4F, which is involved in the recognition of the mRNA cap, ATP-dependent unwinding of 5'-terminal secondary structure and recruitment of mRNA to the ribosome. Recognizes and binds the 7-methylguanosine-containing mRNA cap during an early step in the initiation of protein synthesis and facilitates ribosome binding by inducing the unwinding of the mRNAs secondary structures. Key component of recessive resistance to potyviruses. In terms of biological role, (Microbial infection) Susceptibility host factor required for viral infection (e.g. potato virus Y (PVY) and tobacco etch virus (TEV)) by recruiting viral RNAs to the host ribosomal complex via an interaction with viral genome-linked protein (VPg). The protein is Eukaryotic translation initiation factor 4E-1 of Capsicum annuum (Capsicum pepper).